A 735-amino-acid chain; its full sequence is Photosystem I P700 chlorophyll a apoprotein A2 (735 aa).

Transmembrane regions (helical) follow at residues 46–69 (LFSTHFGHLAIIGLWVSGNLFHIA), 135–158 (LYQGSIFMMILSAWALFAGWLHLQ), 175–199 (LNHHLAVLFGFSSIAWTGHLVHVAI), 273–291 (IAHHHLAIGCLFVIAGHMY), 333–356 (LHFQLGLALASLGVVTSLVAQHMY), 372–398 (AALYTHHQYIAIALMCGAFAHGAIFFI), 420–442 (AIISHLSWVSLFLGFHTLGLYVH), and 518–536 (FLVHHAIALGLHTTTLILV). Residues Cys560 and Cys569 each contribute to the [4Fe-4S] cluster site. Transmembrane regions (helical) follow at residues 576–597 (AFYLAVFWALNTVGWLTFYWHW) and 644–666 (LAVWSWMFLFGHLVWATGFMFLI). Residues His655, Met663, and Tyr671 each contribute to the chlorophyll a site. A phylloquinone-binding site is contributed by Trp672. The helical transmembrane segment at 708–728 (VVGLAHFSVGYVLTYAAFLIA) threads the bilayer.

It belongs to the PsaA/PsaB family. As to quaternary structure, the PsaA/B heterodimer binds the P700 chlorophyll special pair and subsequent electron acceptors. PSI consists of a core antenna complex that captures photons, and an electron transfer chain that converts photonic excitation into a charge separation. The cyanobacterial PSI reaction center is composed of one copy each of PsaA,B,C,D,E,F,I,J,K,L,M and X, and forms trimeric complexes. Requires PSI electron transfer chain: 5 chlorophyll a, 1 chlorophyll a', 2 phylloquinones and 3 4Fe-4S clusters. PSI core antenna: 90 chlorophyll a, 22 carotenoids, 3 phospholipids and 1 galactolipid. P700 is a chlorophyll a/chlorophyll a' dimer, A0 is one or more chlorophyll a, A1 is one or both phylloquinones and FX is a shared 4Fe-4S iron-sulfur center. as cofactor.

Its subcellular location is the cellular thylakoid membrane. It catalyses the reaction reduced [plastocyanin] + hnu + oxidized [2Fe-2S]-[ferredoxin] = oxidized [plastocyanin] + reduced [2Fe-2S]-[ferredoxin]. Its function is as follows. PsaA and PsaB bind P700, the primary electron donor of photosystem I (PSI), as well as the electron acceptors A0, A1 and FX. PSI is a plastocyanin/cytochrome c6-ferredoxin oxidoreductase, converting photonic excitation into a charge separation, which transfers an electron from the donor P700 chlorophyll pair to the spectroscopically characterized acceptors A0, A1, FX, FA and FB in turn. Oxidized P700 is reduced on the lumenal side of the thylakoid membrane by plastocyanin or cytochrome c6. The sequence is that of Photosystem I P700 chlorophyll a apoprotein A2 from Synechococcus sp. (strain CC9902).